The sequence spans 214 residues: MRVRYKPWAEDYLKDHPELVDMEGQHAGEMTEWFDKTQPIHIEIGSGMGQFITTLAAQNPHINYISMEREKSIVYKVLDKVKEMGLTNLKIICNDAIELNEYFKDGEVSRIYLNFSDPWPKNRHAKRRLTYHTFLALYQQILNDEGDLHFKTDNRGLFAYSLESMSQFGMYFTKINLNLHQEDDGSNILTEYEKKFSDKGSRIYRMEAKFHSQK.

S-adenosyl-L-methionine contacts are provided by glutamate 43, glutamate 68, aspartate 95, and aspartate 117. Aspartate 117 is a catalytic residue. Substrate contacts are provided by residues lysine 121, aspartate 153, and 190-193 (TEYE).

It belongs to the class I-like SAM-binding methyltransferase superfamily. TrmB family.

It carries out the reaction guanosine(46) in tRNA + S-adenosyl-L-methionine = N(7)-methylguanosine(46) in tRNA + S-adenosyl-L-homocysteine. The protein operates within tRNA modification; N(7)-methylguanine-tRNA biosynthesis. Its function is as follows. Catalyzes the formation of N(7)-methylguanine at position 46 (m7G46) in tRNA. The protein is tRNA (guanine-N(7)-)-methyltransferase of Staphylococcus aureus (strain Mu3 / ATCC 700698).